The sequence spans 475 residues: Ribulose bisphosphate carboxylase large chain (475 aa).

Positions 1–2 are excised as a propeptide; it reads MS. Pro3 bears the N-acetylproline mark. Lys14 carries the post-translational modification N6,N6,N6-trimethyllysine. Positions 123 and 173 each coordinate substrate. Lys175 acts as the Proton acceptor in catalysis. Lys177 contacts substrate. Residues Lys201, Asp203, and Glu204 each coordinate Mg(2+). Lys201 bears the N6-carboxylysine mark. His294 functions as the Proton acceptor in the catalytic mechanism. Arg295, His327, and Ser379 together coordinate substrate.

Belongs to the RuBisCO large chain family. Type I subfamily. In terms of assembly, heterohexadecamer of 8 large chains and 8 small chains; disulfide-linked. The disulfide link is formed within the large subunit homodimers. It depends on Mg(2+) as a cofactor. In terms of processing, the disulfide bond which can form in the large chain dimeric partners within the hexadecamer appears to be associated with oxidative stress and protein turnover.

It localises to the plastid. It is found in the chloroplast. The catalysed reaction is 2 (2R)-3-phosphoglycerate + 2 H(+) = D-ribulose 1,5-bisphosphate + CO2 + H2O. It catalyses the reaction D-ribulose 1,5-bisphosphate + O2 = 2-phosphoglycolate + (2R)-3-phosphoglycerate + 2 H(+). RuBisCO catalyzes two reactions: the carboxylation of D-ribulose 1,5-bisphosphate, the primary event in carbon dioxide fixation, as well as the oxidative fragmentation of the pentose substrate in the photorespiration process. Both reactions occur simultaneously and in competition at the same active site. This is Ribulose bisphosphate carboxylase large chain from Corylus cornuta (Beaked hazel).